Reading from the N-terminus, the 283-residue chain is Bifunctional protein FolD (283 aa).

Position 166 to 168 (166 to 168 (GAS)) interacts with NADP(+).

This sequence belongs to the tetrahydrofolate dehydrogenase/cyclohydrolase family. In terms of assembly, homodimer.

It carries out the reaction (6R)-5,10-methylene-5,6,7,8-tetrahydrofolate + NADP(+) = (6R)-5,10-methenyltetrahydrofolate + NADPH. The enzyme catalyses (6R)-5,10-methenyltetrahydrofolate + H2O = (6R)-10-formyltetrahydrofolate + H(+). Its pathway is one-carbon metabolism; tetrahydrofolate interconversion. Functionally, catalyzes the oxidation of 5,10-methylenetetrahydrofolate to 5,10-methenyltetrahydrofolate and then the hydrolysis of 5,10-methenyltetrahydrofolate to 10-formyltetrahydrofolate. The sequence is that of Bifunctional protein FolD from Coxiella burnetii (strain Dugway 5J108-111).